A 656-amino-acid chain; its full sequence is Nuclear elongation and deformation protein 1 (656 aa).

2 positions are modified to phosphoserine: serine 99 and serine 103. Residues 99–118 show a composition bias toward polar residues; that stretch reads SPIVSPTTSPKQTPSINVTE. The interval 99–121 is disordered; sequence SPIVSPTTSPKQTPSINVTEPQD. Threonine 106 carries the phosphothreonine modification. Residues serine 107, serine 159, and serine 286 each carry the phosphoserine modification. Disordered regions lie at residues 282–328 and 587–656; these read VYGH…VSES and SDEE…ENAV. Over residues 291–300 the composition is skewed to low complexity; it reads PSRTPASPKS. Serine 318, serine 321, and serine 587 each carry phosphoserine. Residues 318–328 show a composition bias toward polar residues; it reads SEQSLSPVSES. Low complexity predominate over residues 596 to 609; the sequence is KSTSKSPKTPKNTK. The segment covering 640–656 has biased composition (acidic residues); the sequence is FEGEEDEEGEEDVENAV.

This sequence belongs to the lipin family. Interacts with dis3, pim1 and nup189.

Functionally, may have a role in the maintenance of the nuclear envelope structure and in minichromosome stability. This Schizosaccharomyces pombe (strain 972 / ATCC 24843) (Fission yeast) protein is Nuclear elongation and deformation protein 1 (ned1).